A 72-amino-acid chain; its full sequence is MLAQKQKLAPIGINQKIDYKDIDLLKLFITEQGKILPRRATGVTVQQQRQLAKAIKRARILSLLPFVASNEL.

The protein belongs to the bacterial ribosomal protein bS18 family. In terms of assembly, part of the 30S ribosomal subunit.

The protein resides in the plastid. It is found in the chloroplast. The chain is Small ribosomal subunit protein bS18c from Thalassiosira pseudonana (Marine diatom).